The primary structure comprises 225 residues: Protein ERP3 (225 aa).

The signal sequence occupies residues methionine 1–proline 23. The Lumenal segment spans residues leucine 24–serine 195. A GOLD domain is found at lysine 33–tyrosine 172. Positions glutamate 129–arginine 138 are enriched in basic residues. Positions glutamate 129–glutamine 149 are disordered. Residues isoleucine 196–isoleucine 216 traverse the membrane as a helical segment. Over phenylalanine 217–valine 225 the chain is Cytoplasmic.

Belongs to the EMP24/GP25L family.

It is found in the endoplasmic reticulum membrane. In terms of biological role, involved in vesicular protein trafficking. This is Protein ERP3 (ERP3) from Saccharomyces cerevisiae (strain ATCC 204508 / S288c) (Baker's yeast).